We begin with the raw amino-acid sequence, 435 residues long: Secreted RxLR effector protein 35 (435 aa).

A signal peptide spans 1-22 (MRGAYYIIIALCVVASSQVAAG). The RxLR-dEER motif lies at 48–65 (RFLRGSRVVHDDLANEER). The tract at residues 336 to 357 (RPKRTTDGNTGTISLPTKPTKT) is disordered. The span at 342–354 (DGNTGTISLPTKP) shows a compositional bias: polar residues.

This sequence belongs to the RxLR effector family.

It localises to the secreted. The protein resides in the host nucleus. Its function is as follows. Secreted effector that acts as an elicitor that induces cell death in host plant cells. The polypeptide is Secreted RxLR effector protein 35 (Plasmopara viticola (Downy mildew of grapevine)).